An 835-amino-acid chain; its full sequence is BCL11 transcription factor A (835 aa).

Residues 1-12 (MSRRKQGKPQHL) are compositionally biased toward basic residues. Residues 1–41 (MSRRKQGKPQHLSKREFSPEPLEAILTDDEPDHGPLGAPEG) are disordered. Residues 1-210 (MSRRKQGKPQ…SEHGSPLTPR (210 aa)) are required for nuclear body formation and for SUMO1 recruitment. Residues 45–71 (LLTCGQCQMNFPLGDILIFIEHKRKQC) form a C2HC-type zinc finger. Zn(2+)-binding residues include Cys-48, Cys-51, His-66, and Cys-71. Ser-86 is subject to Phosphoserine. Lys-123 is covalently cross-linked (Glycyl lysine isopeptide (Lys-Gly) (interchain with G-Cter in SUMO2)). Ile-162 is modified (phosphothreonine). Lys-164 participates in a covalent cross-link: Glycyl lysine isopeptide (Lys-Gly) (interchain with G-Cter in SUMO2). The C2H2-type 1 zinc finger occupies 170–193 (YTCTTCKQPFTSAWFLLQHAQNTH). A Phosphoserine modification is found at Ser-205. At Pro-214 the chain carries Phosphothreonine. Arg-271 carries the asymmetric dimethylarginine modification. Residues 323–376 (AGNTSSPPLSPGRPSPMQRLLQPFQPGSKPPFLATPPLPPLQSAPPPSQPPVKS) are disordered. Ser-332 and Ser-337 each carry phosphoserine. The segment covering 355–372 (LATPPLPPLQSAPPPSQP) has biased composition (pro residues). 2 consecutive C2H2-type zinc fingers follow at residues 377 to 399 (KSCEFCGKTFKFQSNLVVHRRSH) and 405 to 429 (YKCNLCDHACTQASKLKRHMKTHMH). Residues 421–430 (KRHMKTHMHK) show a composition bias toward basic residues. 3 disordered regions span residues 421–458 (KRHMKTHMHKSSPMTVKSDDGLSTASSPEPGTSDLVGS), 471–512 (KSEN…ERVD), and 572–619 (RSHL…GLSK). Polar residues predominate over residues 441 to 450 (GLSTASSPEP). A phosphoserine mark is found at Ser-446 and Ser-447. Acidic residues predominate over residues 482 to 506 (NGDEEEEEDDEEEEEEEEEEEEELT). The segment covering 574-584 (HLAEAEGHRDT) has biased composition (basic and acidic residues). Ser-608 is subject to Phosphoserine. Lys-620 is covalently cross-linked (Glycyl lysine isopeptide (Lys-Gly) (interchain with G-Cter in SUMO2)). A phosphoserine mark is found at Ser-625 and Ser-630. Lys-634 participates in a covalent cross-link: Glycyl lysine isopeptide (Lys-Gly) (interchain with G-Cter in SUMO1). Over residues 682 to 696 (SPFASSSEHSSENGS) the composition is skewed to low complexity. The residue at position 701 (Thr-701) is a Phosphothreonine. A compositionally biased stretch (gly residues) spans 706–720 (LDGGISGRSGTGSGG). Positions 737 to 835 (EGRRSDTCEY…RVLNNDIKTE (99 aa)) are DNA-binding. The C2H2-type 4 zinc-finger motif lies at 742-764 (DTCEYCGKVFKNCSNLTVHRRSH). Zn(2+) is bound by residues Cys-744, Cys-747, His-760, and His-764. Over residues 764-773 (HTGERPYKCE) the composition is skewed to polar residues. Positions 765 to 769 (TGERP) are disordered. The C2H2-type 5 zinc-finger motif lies at 770-792 (YKCELCNYACAQSSKLTRHMKTH). Positions 772, 775, 788, and 792 each coordinate Zn(2+). The segment at 793–799 (GQVGKDV) is disordered. The C2H2-type 6 zinc finger occupies 800-823 (YKCEICKMPFSVYSTLEKHMKKWH). Zn(2+) is bound by residues Cys-802, Cys-805, His-818, and His-823.

Homotetrameric; self-associates via C2HC-type zinc finger domain. Interacts with MTA2, a component of the nucleosome remodeling and deacetylase (NuRD) repressor complex. Interacts with NR2F1, PIAS3, NR2F2 and NR2F6. Interacts with TBR1. In terms of processing, sumoylated with SUMO1. Isoforms are expressed in a tissue-specific fashion. Isoforms 1, isoform 2, and isoform 3 are expressed at similar levels in testis, kidney and spleen. Isoform 1 is expressed in the stomach, and isoform 2 is expressed exclusively in the lung. Overexpression following proviral integration in hematopoietic cells results in the generation of myeloid leukemia.

The protein localises to the cytoplasm. The protein resides in the nucleus. Functionally, transcription factor. Associated with the BAF SWI/SNF chromatin remodeling complex. Binds to the 5'-TGACCA-3' sequence motif in regulatory regions of target genes. Involved in brain development. May play a role in hematopoiesis. Essential factor in lymphopoiesis, required for B-cell formation in fetal liver. May function as a modulator of the transcriptional repression activity of NR2F2. The sequence is that of BCL11 transcription factor A (Bcl11a) from Mus musculus (Mouse).